The primary structure comprises 455 residues: L-serine dehydratase (455 aa).

It belongs to the iron-sulfur dependent L-serine dehydratase family. It depends on [4Fe-4S] cluster as a cofactor.

The enzyme catalyses L-serine = pyruvate + NH4(+). Its pathway is carbohydrate biosynthesis; gluconeogenesis. The polypeptide is L-serine dehydratase (sdaA) (Haemophilus influenzae (strain ATCC 51907 / DSM 11121 / KW20 / Rd)).